A 247-amino-acid chain; its full sequence is uncharacterized protein (247 aa).

This is an uncharacterized protein from Archaeoglobus fulgidus (strain ATCC 49558 / DSM 4304 / JCM 9628 / NBRC 100126 / VC-16).